The primary structure comprises 98 residues: NADH-ubiquinone oxidoreductase chain 4L (98 aa).

A run of 3 helical transmembrane segments spans residues 1–21 (MTMVYANIFLAFTTSLMGLLM), 29–49 (SLLCLEGMMLSLFVMMTVTIL), and 61–81 (IILLVFAACEAALGLSLLVMV).

Belongs to the complex I subunit 4L family. Core subunit of respiratory chain NADH dehydrogenase (Complex I) which is composed of 45 different subunits.

It localises to the mitochondrion inner membrane. It carries out the reaction a ubiquinone + NADH + 5 H(+)(in) = a ubiquinol + NAD(+) + 4 H(+)(out). In terms of biological role, core subunit of the mitochondrial membrane respiratory chain NADH dehydrogenase (Complex I) which catalyzes electron transfer from NADH through the respiratory chain, using ubiquinone as an electron acceptor. Part of the enzyme membrane arm which is embedded in the lipid bilayer and involved in proton translocation. The polypeptide is NADH-ubiquinone oxidoreductase chain 4L (MT-ND4L) (Neomonachus schauinslandi (Hawaiian monk seal)).